The sequence spans 186 residues: UPF0669 protein C6orf120 homolog (186 aa).

The N-terminal stretch at 1–19 is a signal peptide; the sequence is MVPFWAGLLVLSALPQTLG. N47 carries an N-linked (GlcNAc...) asparagine glycan. Residues 141–165 form a disordered region; sequence KNSYSSDETPGQPRQSQGPEDTEEE. Residues 142-159 are compositionally biased toward polar residues; that stretch reads NSYSSDETPGQPRQSQGP.

The protein belongs to the UPF0669 family.

The protein localises to the secreted. This Danio rerio (Zebrafish) protein is UPF0669 protein C6orf120 homolog.